Consider the following 714-residue polypeptide: Probable serine/threonine-protein kinase mkcB (714 aa).

Residues 1–12 (MKSILKKAKHFF) are compositionally biased toward basic residues. Disordered stretches follow at residues 1 to 267 (MKSI…SSTS) and 281 to 349 (GSGS…EQKP). Residues 23–35 (GGEKTAKESESQQ) are compositionally biased toward basic and acidic residues. The span at 62–83 (SQSQPTTSALQTSTSLQPSSSL) shows a compositional bias: low complexity. Residues 84 to 94 (HQIPQSQSSLE) show a composition bias toward polar residues. 2 stretches are compositionally biased toward low complexity: residues 95–111 (LTTNPTQQLPTTPTKQL) and 120–166 (PHSQ…TLTT). Polar residues predominate over residues 167 to 177 (PVPSSENLATL). Low complexity-rich tracts occupy residues 178–241 (STST…QEQT) and 254–267 (LSQSTTSSSTSSTS). Positions 282–294 (SGSTKNKDSSSAP) are enriched in polar residues. Low complexity-rich tracts occupy residues 300–314 (NNNNNTVSSSNKNRS) and 324–337 (NNNNNNQNNHKNNN). The 250-residue stretch at 438 to 687 (YKDSDQVGKG…AEELLKHPFI (250 aa)) folds into the Protein kinase domain. ATP contacts are provided by residues 444–452 (VGKGGFGTV) and lysine 467. Residue aspartate 558 is the Proton acceptor of the active site.

This sequence belongs to the protein kinase superfamily. STE Ser/Thr protein kinase family. STE20 subfamily. The cofactor is Mg(2+). In terms of tissue distribution, expressed at equal levels in prestalk and prespore cells.

It carries out the reaction L-seryl-[protein] + ATP = O-phospho-L-seryl-[protein] + ADP + H(+). It catalyses the reaction L-threonyl-[protein] + ATP = O-phospho-L-threonyl-[protein] + ADP + H(+). The protein is Probable serine/threonine-protein kinase mkcB of Dictyostelium discoideum (Social amoeba).